The following is a 153-amino-acid chain: Aspartate carbamoyltransferase regulatory chain (153 aa).

Zn(2+) contacts are provided by C109, C114, C138, and C141.

Belongs to the PyrI family. As to quaternary structure, contains catalytic and regulatory chains. It depends on Zn(2+) as a cofactor.

Its function is as follows. Involved in allosteric regulation of aspartate carbamoyltransferase. In Edwardsiella ictaluri (strain 93-146), this protein is Aspartate carbamoyltransferase regulatory chain.